Consider the following 271-residue polypeptide: Small ribosomal subunit protein uS2 (271 aa).

Belongs to the universal ribosomal protein uS2 family.

This Wolbachia pipientis subsp. Culex pipiens (strain wPip) protein is Small ribosomal subunit protein uS2.